Here is a 63-residue protein sequence, read N- to C-terminus: Small ribosomal subunit protein eS27 (63 aa).

Residues Cys-18, Cys-21, Cys-37, and Cys-40 each coordinate Zn(2+). A C4-type zinc finger spans residues 18–40; it reads CLDCGNQQVVFDRAASYVQCIIC.

The protein belongs to the eukaryotic ribosomal protein eS27 family. As to quaternary structure, part of the 30S ribosomal subunit. It depends on Zn(2+) as a cofactor.

This is Small ribosomal subunit protein eS27 from Methanothermobacter thermautotrophicus (strain ATCC 29096 / DSM 1053 / JCM 10044 / NBRC 100330 / Delta H) (Methanobacterium thermoautotrophicum).